Reading from the N-terminus, the 380-residue chain is Cytochrome b (380 aa).

4 helical membrane-spanning segments follow: residues 34–54 (FGSL…LLAM), 78–99 (WLIR…YLHI), 114–134 (WNTG…GYVL), and 179–199 (FFAL…IHLT). The heme b site is built by His-84 and His-98. The heme b site is built by His-183 and His-197. His-202 lines the a ubiquinone pocket. 4 helical membrane passes run 227-247 (TKDL…AMFS), 289-309 (LGGV…PFLH), 321-341 (LSQL…WVGS), and 348-368 (FIII…ILFP).

Belongs to the cytochrome b family. In terms of assembly, the cytochrome bc1 complex contains 11 subunits: 3 respiratory subunits (MT-CYB, CYC1 and UQCRFS1), 2 core proteins (UQCRC1 and UQCRC2) and 6 low-molecular weight proteins (UQCRH/QCR6, UQCRB/QCR7, UQCRQ/QCR8, UQCR10/QCR9, UQCR11/QCR10 and a cleavage product of UQCRFS1). This cytochrome bc1 complex then forms a dimer. Requires heme b as cofactor.

The protein localises to the mitochondrion inner membrane. Functionally, component of the ubiquinol-cytochrome c reductase complex (complex III or cytochrome b-c1 complex) that is part of the mitochondrial respiratory chain. The b-c1 complex mediates electron transfer from ubiquinol to cytochrome c. Contributes to the generation of a proton gradient across the mitochondrial membrane that is then used for ATP synthesis. The sequence is that of Cytochrome b (MT-CYB) from Amazilia tzacatl (Rufous-tailed hummingbird).